We begin with the raw amino-acid sequence, 106 residues long: NADH dehydrogenase [ubiquinone] iron-sulfur protein 5 (106 aa).

The CHCH domain maps to 30–74; that stretch reads PSRCHAFEKEWIECAHGIGSIRAEKECKIEFEDFRECLLRQKTMK. 2 consecutive short sequence motifs (cx9C motif) follow at residues 33-43 and 56-66; these read CHAFEKEWIEC and CKIEFEDFREC. 2 disulfide bridges follow: Cys-33–Cys-66 and Cys-43–Cys-56. Positions 84–106 are disordered; that stretch reads EKLIKEGKYTPPPHHSGQEEPRS.

It belongs to the complex I NDUFS5 subunit family. In terms of assembly, mammalian complex I is composed of 45 different subunits. This is a component of the iron-sulfur (IP) fragment of the enzyme.

It is found in the mitochondrion inner membrane. Its subcellular location is the mitochondrion intermembrane space. In terms of biological role, accessory subunit of the mitochondrial membrane respiratory chain NADH dehydrogenase (Complex I), that is believed not to be involved in catalysis. Complex I functions in the transfer of electrons from NADH to the respiratory chain. The immediate electron acceptor for the enzyme is believed to be ubiquinone. This chain is NADH dehydrogenase [ubiquinone] iron-sulfur protein 5 (NDUFS5), found in Bos taurus (Bovine).